The chain runs to 347 residues: UPF0283 membrane protein ECA1987 (347 aa).

Residues 1–11 are compositionally biased toward basic and acidic residues; that stretch reads MNEPLKPRVTF. The segment at 1–48 is disordered; that stretch reads MNEPLKPRVTFDDVSPQEPQPQLRAGLAFDEQSSTPFSPISREEEVPE. A run of 3 helical transmembrane segments spans residues 70–90, 99–119, and 213–233; these read MVMAGVALFGISALAQGVQSL, WIALGGITAGSLIVAAGVGSL, and ESTLMIAVSPLALVDMAFIAW.

This sequence belongs to the UPF0283 family.

It is found in the cell inner membrane. The protein is UPF0283 membrane protein ECA1987 of Pectobacterium atrosepticum (strain SCRI 1043 / ATCC BAA-672) (Erwinia carotovora subsp. atroseptica).